The following is a 369-amino-acid chain: tRNA 2-selenouridine synthase (369 aa).

The Rhodanese domain occupies 15–138 (FLNQHPMMDV…MRQYLIGVIE (124 aa)). The active-site S-selanylcysteine intermediate is the Cys-98.

It belongs to the SelU family. Monomer.

The catalysed reaction is 5-methylaminomethyl-2-thiouridine(34) in tRNA + selenophosphate + (2E)-geranyl diphosphate + H2O + H(+) = 5-methylaminomethyl-2-selenouridine(34) in tRNA + (2E)-thiogeraniol + phosphate + diphosphate. It carries out the reaction 5-methylaminomethyl-2-thiouridine(34) in tRNA + (2E)-geranyl diphosphate = 5-methylaminomethyl-S-(2E)-geranyl-thiouridine(34) in tRNA + diphosphate. It catalyses the reaction 5-methylaminomethyl-S-(2E)-geranyl-thiouridine(34) in tRNA + selenophosphate + H(+) = 5-methylaminomethyl-2-(Se-phospho)selenouridine(34) in tRNA + (2E)-thiogeraniol. The enzyme catalyses 5-methylaminomethyl-2-(Se-phospho)selenouridine(34) in tRNA + H2O = 5-methylaminomethyl-2-selenouridine(34) in tRNA + phosphate. In terms of biological role, involved in the post-transcriptional modification of the uridine at the wobble position (U34) of tRNA(Lys), tRNA(Glu) and tRNA(Gln). Catalyzes the conversion of 2-thiouridine (S2U-RNA) to 2-selenouridine (Se2U-RNA). Acts in a two-step process involving geranylation of 2-thiouridine (S2U) to S-geranyl-2-thiouridine (geS2U) and subsequent selenation of the latter derivative to 2-selenouridine (Se2U) in the tRNA chain. This Shewanella sp. (strain W3-18-1) protein is tRNA 2-selenouridine synthase.